The following is a 400-amino-acid chain: MGRAKKVVLAYSGGVDTSVCIPYLMHEWGVEEVITLAADLGQGDELGPIQEKALRCGAVESLVIDGKEEFVKEYAFRSIQANALYENRYPLSTALARPLIAKMLVEAAEKYGADAVAHGCTGKGNDQVRFDISIMALNPNLKVLAPAREWKMSREETIAYGERYGVESPVKKSSPYSIDRNILGRSIEAGPLEDPMTEPTEEIYLMTKAIADTPDEPEYVDIGFEKGIPVSLNGVMLDPVTLVERLNEIAGNHGVGRLDMVENRVVGIKSREIYEAPALLVLIDAHRDLESLTQTADVTHYKNTVEEIYSQLIYRGLWYSPLKEALDAFIVKTQERVTGMVRVKFFKGNANVAGRKSDYSIYDAELATYGMEDQFDHKAAEGFIYIWGLPTKVWAQKMRG.

Residues 10 to 18 (AYSGGVDTS) and A38 each bind ATP. Y89 provides a ligand contact to L-citrulline. Residue G119 participates in ATP binding. L-aspartate contacts are provided by T121, N125, and D126. N125 serves as a coordination point for L-citrulline. R129, S177, S186, E262, and Y274 together coordinate L-citrulline.

The protein belongs to the argininosuccinate synthase family. Type 1 subfamily. In terms of assembly, homotetramer.

The protein localises to the cytoplasm. The enzyme catalyses L-citrulline + L-aspartate + ATP = 2-(N(omega)-L-arginino)succinate + AMP + diphosphate + H(+). It participates in amino-acid biosynthesis; L-arginine biosynthesis; L-arginine from L-ornithine and carbamoyl phosphate: step 2/3. With respect to regulation, activity decreases to 53.9% and 18.4% in the presence of 1 mM and 5 mM arginine, respectively. Activity also decreases to 80.1%, 78.1% and 92.1% in the presence of 5 mM ornithine, lysine and succinate, respectively. Activity does not decrease in the presence of glutamate, glutamine or asparagine. Functionally, catalyzes the condensation of citrulline and aspartate into argininosuccinate, the immediate precursor of arginine. SyArgG is the rate-limiting step in arginine biosynthesis in Synechocystis PCC 6803. This is Argininosuccinate synthase from Synechocystis sp. (strain ATCC 27184 / PCC 6803 / Kazusa).